The following is a 146-amino-acid chain: uncharacterized protein (146 aa).

This is an uncharacterized protein from Methanothermobacter thermautotrophicus (Methanobacterium thermoformicicum).